The sequence spans 52 residues: Large ribosomal subunit protein bL33 (52 aa).

The protein belongs to the bacterial ribosomal protein bL33 family.

The polypeptide is Large ribosomal subunit protein bL33 (Chlamydia trachomatis serovar L2 (strain ATCC VR-902B / DSM 19102 / 434/Bu)).